The sequence spans 497 residues: Cobyric acid synthase (497 aa).

Residues 250–445 (EVTIAVIRLP…LHGIFNNGPW (196 aa)) form the GATase cobBQ-type domain. Residue C331 is the Nucleophile of the active site. The active site involves H437.

Belongs to the CobB/CobQ family. CobQ subfamily.

It functions in the pathway cofactor biosynthesis; adenosylcobalamin biosynthesis. Functionally, catalyzes amidations at positions B, D, E, and G on adenosylcobyrinic A,C-diamide. NH(2) groups are provided by glutamine, and one molecule of ATP is hydrogenolyzed for each amidation. The chain is Cobyric acid synthase from Acaryochloris marina (strain MBIC 11017).